The primary structure comprises 78 residues: Hainantoxin-XX.3 (78 aa).

An N-terminal signal peptide occupies residues 1 to 23 (MKSATLLALSFLLIASCFLICEA). The propeptide occupies 24–47 (EHSRYEEHEILEENMGDVVNLEQR). Cystine bridges form between cysteine 49/cysteine 62, cysteine 56/cysteine 66, and cysteine 61/cysteine 77.

This sequence belongs to the hainantoxin family. 20 subfamily. As to expression, expressed by the venom gland.

The protein localises to the secreted. Functionally, putative ion channel inhibitor. The sequence is that of Hainantoxin-XX.3 from Cyriopagopus hainanus (Chinese bird spider).